The sequence spans 570 residues: Ribosome-inactivating protein SNAIf (570 aa).

A signal peptide spans Met1–Arg28. 3 N-linked (GlcNAc...) asparagine glycosylation sites follow: Asn40, Asn62, and Asn140. The active site involves Glu199. Asn232 carries N-linked (GlcNAc...) asparagine glycosylation. 3 disulfides stabilise this stretch: Cys284–Cys316, Cys332–Cys351, and Cys373–Cys385. 2 Ricin B-type lectin domains span residues Val319–Gly439 and Val441–Thr566. A 1-alpha repeat occupies Asp329 to Trp369. Residues Leu370–Asn405 form a 1-beta repeat. A 1-gamma repeat occupies Ser408 to Asp440. One copy of the 2-alpha repeat lies at Lys452–Val489. An intrachain disulfide couples Cys455 to Cys470. N-linked (GlcNAc...) asparagine glycosylation is present at Asn492. A 2-beta repeat occupies Arg493–Asn531. Cys496 and Cys513 are joined by a disulfide. N-linked (GlcNAc...) asparagine glycosylation is found at Asn526 and Asn544. One copy of the 2-gamma repeat lies at Ala534–Thr567.

Belongs to the ribosome-inactivating protein family. Type 2 RIP subfamily. In terms of assembly, tetramer of four pairs of disulfide bound A-B chains. In terms of processing, the precursor is processed in two chains, A and B, that are linked by a disulfide bond. A small truncated form corresponding roughly to the second ricin B-type lectin domain of the B chain, TrSNAIf, can also be produced. Post-translationally, N-glycosylated. In terms of tissue distribution, expressed in fruits.

The catalysed reaction is Endohydrolysis of the N-glycosidic bond at one specific adenosine on the 28S rRNA.. Functionally, neu5Ac(alpha2-6)Gal/GalNAc specific agglutinin. Behaves as a type-2 ribosome-inactivating protein. Strongly inhibits mammalian but not plant ribosomes. The A chain is responsible for inhibiting protein synthesis through the catalytic inactivation of 60S ribosomal subunits by removing adenine from position 4,324 of 28S rRNA. The B chain binds to cell receptors and probably facilitates the entry into the cell of the A chain; B chains are also responsible for cell agglutination (lectin activity). Involved in plant defense against insects. Binds Neu5Ac(alpha2-6)Gal/GalNAc but has no clear agglutination activity. This chain is Ribosome-inactivating protein SNAIf, found in Sambucus nigra (European elder).